Reading from the N-terminus, the 174-residue chain is Soma ferritin (174 aa).

In terms of domain architecture, Ferritin-like diiron spans Q8 to G157. Residues E25, E60, H63, E105, and Q139 each contribute to the Fe cation site.

The protein belongs to the ferritin family. In terms of assembly, oligomer of 12 or 24 subunits. The functional molecule is roughly spherical and contains a central cavity into which the polymeric mineral iron core is deposited. In terms of tissue distribution, expressed in somatic tissues but not in oocytes.

The protein resides in the cytoplasm. The enzyme catalyses 4 Fe(2+) + O2 + 4 H(+) = 4 Fe(3+) + 2 H2O. Stores iron in a soluble, non-toxic, readily available form. Important for iron homeostasis. Has ferroxidase activity. Iron is taken up in the ferrous form and deposited as ferric hydroxides after oxidation. The sequence is that of Soma ferritin from Lymnaea stagnalis (Great pond snail).